The following is a 496-amino-acid chain: GTPase Der (496 aa).

EngA-type G domains lie at 3–166 and 208–381; these read PVVA…FDNL and IKLA…RSAT. GTP is bound by residues 9–16, 56–60, 118–121, 214–221, 261–265, and 326–329; these read GRPNVGKS, DTGGI, NKVD, DTAGV, and NKWD. One can recognise a KH-like domain in the interval 382–466; that stretch reads TRVGTSVLTR…PIRIQFQNSD (85 aa).

Belongs to the TRAFAC class TrmE-Era-EngA-EngB-Septin-like GTPase superfamily. EngA (Der) GTPase family. Associates with the 50S ribosomal subunit.

Functionally, GTPase that plays an essential role in the late steps of ribosome biogenesis. The protein is GTPase Der of Vibrio vulnificus (strain YJ016).